Consider the following 159-residue polypeptide: 16 kDa outer membrane lipoprotein (159 aa).

The first 21 residues, 1–21 (MNKKIFTLFLVVAASAIFAVS), serve as a signal peptide directing secretion. A lipid anchor (N-palmitoyl cysteine) is attached at Cys22. The S-diacylglycerol cysteine moiety is linked to residue Cys22.

Its subcellular location is the cell outer membrane. This chain is 16 kDa outer membrane lipoprotein (smpA), found in Brachyspira hyodysenteriae (Treponema hyodysenteriae).